Reading from the N-terminus, the 213-residue chain is Pyrrolidone-carboxylate peptidase (213 aa).

Catalysis depends on residues glutamate 78, cysteine 141, and histidine 165.

It belongs to the peptidase C15 family. In terms of assembly, homotetramer.

It is found in the cytoplasm. It carries out the reaction Release of an N-terminal pyroglutamyl group from a polypeptide, the second amino acid generally not being Pro.. Removes 5-oxoproline from various penultimate amino acid residues except L-proline. The polypeptide is Pyrrolidone-carboxylate peptidase (Staphylococcus saprophyticus subsp. saprophyticus (strain ATCC 15305 / DSM 20229 / NCIMB 8711 / NCTC 7292 / S-41)).